A 169-amino-acid polypeptide reads, in one-letter code: Ribosomal RNA large subunit methyltransferase H (169 aa).

Residues Leu85, Gly117, and 136–141 (LGELTW) each bind S-adenosyl-L-methionine.

This sequence belongs to the RNA methyltransferase RlmH family. In terms of assembly, homodimer.

Its subcellular location is the cytoplasm. It carries out the reaction pseudouridine(1915) in 23S rRNA + S-adenosyl-L-methionine = N(3)-methylpseudouridine(1915) in 23S rRNA + S-adenosyl-L-homocysteine + H(+). Its function is as follows. Specifically methylates the pseudouridine at position 1915 (m3Psi1915) in 23S rRNA. The chain is Ribosomal RNA large subunit methyltransferase H from Brucella abortus biovar 1 (strain 9-941).